Consider the following 363-residue polypeptide: Aminomethyltransferase (363 aa).

Belongs to the GcvT family. As to quaternary structure, the glycine cleavage system is composed of four proteins: P, T, L and H.

It catalyses the reaction N(6)-[(R)-S(8)-aminomethyldihydrolipoyl]-L-lysyl-[protein] + (6S)-5,6,7,8-tetrahydrofolate = N(6)-[(R)-dihydrolipoyl]-L-lysyl-[protein] + (6R)-5,10-methylene-5,6,7,8-tetrahydrofolate + NH4(+). Its function is as follows. The glycine cleavage system catalyzes the degradation of glycine. The chain is Aminomethyltransferase from Staphylococcus aureus (strain N315).